We begin with the raw amino-acid sequence, 20 residues long: Lysozyme (20 aa).

As to quaternary structure, monomer.

Its subcellular location is the secreted. It catalyses the reaction Hydrolysis of (1-&gt;4)-beta-linkages between N-acetylmuramic acid and N-acetyl-D-glucosamine residues in a peptidoglycan and between N-acetyl-D-glucosamine residues in chitodextrins.. Its function is as follows. Has bacteriolytic activity. The sequence is that of Lysozyme from Lysobacter sp. (strain XL1).